The following is a 370-amino-acid chain: Histidinol-phosphate aminotransferase 1 (370 aa).

Residue Lys222 is modified to N6-(pyridoxal phosphate)lysine.

The protein belongs to the class-II pyridoxal-phosphate-dependent aminotransferase family. Histidinol-phosphate aminotransferase subfamily. Homodimer. Pyridoxal 5'-phosphate is required as a cofactor.

The catalysed reaction is L-histidinol phosphate + 2-oxoglutarate = 3-(imidazol-4-yl)-2-oxopropyl phosphate + L-glutamate. Its pathway is amino-acid biosynthesis; L-histidine biosynthesis; L-histidine from 5-phospho-alpha-D-ribose 1-diphosphate: step 7/9. In Bacillus anthracis, this protein is Histidinol-phosphate aminotransferase 1 (hisC1).